Consider the following 178-residue polypeptide: UPF0114 protein in repA1-repA2 intergenic region (178 aa).

3 consecutive transmembrane segments (helical) span residues 14-34 (WLIF…TLKF), 53-73 (LILV…LVMV), and 136-156 (WYVI…YIDR).

It belongs to the UPF0114 family.

It is found in the cell membrane. This chain is UPF0114 protein in repA1-repA2 intergenic region, found in Buchnera aphidicola subsp. Tetraneura caerulescens.